A 591-amino-acid polypeptide reads, in one-letter code: Acetyltransferase spyB (591 aa).

N-linked (GlcNAc...) asparagine glycosylation is present at Asn114. 9 consecutive transmembrane segments (helical) span residues 123–143 (GTII…LIFL), 168–188 (TLLY…ILIL), 199–219 (LWIF…ISHG), 228–248 (VGVQ…INPL), 309–329 (SAFL…LNCA), 383–403 (ASIL…PLFG), 453–473 (IFFV…LMGI), 481–501 (ILFF…QAAW), and 529–549 (LVGF…WLCP).

This sequence belongs to the wax synthase family.

It is found in the membrane. It carries out the reaction sartorypyrone F + acetyl-CoA = sartorypyrone G + CoA. The catalysed reaction is sartorypyrone D + acetyl-CoA = sartorypyrone A + CoA. Its pathway is secondary metabolite biosynthesis; terpenoid biosynthesis. Acetyltransferase; part of the gene cluster that mediates the biosynthesis of meroterpenoids called sartorypyrones. SpyB catalyzes the last step of the pathway and is responsible for the acetylation of sartorypyrones D and F to produce sartorypyrones A and G, respectively. The biosynthesis of sartorypyrones begins with the production of triacetic acid lactone (TAL) by the NR-PKS spyA using one molecule of acetyl-CoA and two molecules of malonyl-CoA. The prenyltransferase spyF then conjugates geranylgeranyl pyrophosphate (GGPP) to TAL to form geranylgeranyl-triacetate lactone, for which the pathway-specific geranylgeranyl pyrophosphate synthase (GGPS) spyE is required to provide GGPP. Subsequently, geranylgeranyl-triacetate lactone is epoxidized at the terminal olein by the FAD-dependent monooxygenase spyC, followed by cyclization of the terpenoid component catalyzed by the terpene cyclase spyD to produce both the bicyclic sartorypyrone F and the monocyclic sartorypyrone D. Finally, the last step of the biosynthesis involves the acetylation of the meroterpenoids sartorypyrones D and F by the acetyltransferase SpyB to produce sartorypyrones A and G, respectively. This Aspergillus fumigatus (strain ATCC MYA-4609 / CBS 101355 / FGSC A1100 / Af293) (Neosartorya fumigata) protein is Acetyltransferase spyB.